A 325-amino-acid polypeptide reads, in one-letter code: Beta-ketoacyl-[acyl-carrier-protein] synthase III (325 aa).

Residues Cys-116 and His-252 contribute to the active site. The interval 253-257 (QANLR) is ACP-binding. Asn-282 is an active-site residue.

Belongs to the thiolase-like superfamily. FabH family. In terms of assembly, homodimer.

It localises to the cytoplasm. It catalyses the reaction malonyl-[ACP] + acetyl-CoA + H(+) = 3-oxobutanoyl-[ACP] + CO2 + CoA. Its pathway is lipid metabolism; fatty acid biosynthesis. In terms of biological role, catalyzes the condensation reaction of fatty acid synthesis by the addition to an acyl acceptor of two carbons from malonyl-ACP. Catalyzes the first condensation reaction which initiates fatty acid synthesis and may therefore play a role in governing the total rate of fatty acid production. Possesses both acetoacetyl-ACP synthase and acetyl transacylase activities. Its substrate specificity determines the biosynthesis of branched-chain and/or straight-chain of fatty acids. The protein is Beta-ketoacyl-[acyl-carrier-protein] synthase III of Xanthomonas axonopodis pv. citri (strain 306).